Reading from the N-terminus, the 492-residue chain is Bifunctional purine biosynthesis protein PurH (492 aa).

The MGS-like domain maps to 1 to 144; the sequence is MKKAILSVSN…KNYKHVTTIV (144 aa).

Belongs to the PurH family.

The enzyme catalyses (6R)-10-formyltetrahydrofolate + 5-amino-1-(5-phospho-beta-D-ribosyl)imidazole-4-carboxamide = 5-formamido-1-(5-phospho-D-ribosyl)imidazole-4-carboxamide + (6S)-5,6,7,8-tetrahydrofolate. The catalysed reaction is IMP + H2O = 5-formamido-1-(5-phospho-D-ribosyl)imidazole-4-carboxamide. It participates in purine metabolism; IMP biosynthesis via de novo pathway; 5-formamido-1-(5-phospho-D-ribosyl)imidazole-4-carboxamide from 5-amino-1-(5-phospho-D-ribosyl)imidazole-4-carboxamide (10-formyl THF route): step 1/1. It functions in the pathway purine metabolism; IMP biosynthesis via de novo pathway; IMP from 5-formamido-1-(5-phospho-D-ribosyl)imidazole-4-carboxamide: step 1/1. This Staphylococcus aureus (strain MSSA476) protein is Bifunctional purine biosynthesis protein PurH.